We begin with the raw amino-acid sequence, 107 residues long: U1-lycotoxin-Ls1x (107 aa).

An N-terminal signal peptide occupies residues 1-20 (MMKVLVVVALLVTLISYSSS). The propeptide occupies 21 to 41 (EGIDDLEADELLSLMANEHPR). Disulfide bonds link cysteine 44-cysteine 59, cysteine 51-cysteine 68, cysteine 58-cysteine 86, and cysteine 70-cysteine 84.

This sequence belongs to the neurotoxin 19 (CSTX) family. 04 (U1-Lctx) subfamily. As to expression, expressed by the venom gland.

The protein localises to the secreted. The polypeptide is U1-lycotoxin-Ls1x (Lycosa singoriensis (Wolf spider)).